We begin with the raw amino-acid sequence, 242 residues long: MNDVIIRQLAHLIPYQPLWEAMQTFTARRQSQTTDEIWFLEHEPVFTQGLAGKPEHVLNSGNIPLIRTDRGGQVTYHGPGQLMMYLLLDLNRLGLSTRTFVRTIENTVAESLQEWGIPAQGKETAPGVYVDDKKICSIGLRVRKGFSYHGLALNVAMDLTPFSCINPCGFKGLMMTQIQDYVNPIEMDAVKRTIIPLFLKNFGYNQPAIMVETSLEFLIDDHLRSFSEKLGERETVTNSRQN.

The region spanning 31–206 is the BPL/LPL catalytic domain; sequence SQTTDEIWFL…LFLKNFGYNQ (176 aa). Residues 70–77, 137–139, and 150–152 contribute to the substrate site; these read RGGQVTYH, SIG, and GLA. C168 (acyl-thioester intermediate) is an active-site residue.

It belongs to the LipB family.

Its subcellular location is the cytoplasm. It carries out the reaction octanoyl-[ACP] + L-lysyl-[protein] = N(6)-octanoyl-L-lysyl-[protein] + holo-[ACP] + H(+). The protein operates within protein modification; protein lipoylation via endogenous pathway; protein N(6)-(lipoyl)lysine from octanoyl-[acyl-carrier-protein]: step 1/2. Its function is as follows. Catalyzes the transfer of endogenously produced octanoic acid from octanoyl-acyl-carrier-protein onto the lipoyl domains of lipoate-dependent enzymes. Lipoyl-ACP can also act as a substrate although octanoyl-ACP is likely to be the physiological substrate. This Coxiella burnetii (strain CbuG_Q212) (Coxiella burnetii (strain Q212)) protein is Octanoyltransferase.